A 432-amino-acid polypeptide reads, in one-letter code: Glutamyl-tRNA reductase (432 aa).

Residues 49–52 (TCNR), Ser107, 112–114 (ETQ), and Gln118 each bind substrate. The Nucleophile role is filled by Cys50. NADP(+) is bound at residue 186-191 (GAGEMG).

The protein belongs to the glutamyl-tRNA reductase family. In terms of assembly, homodimer.

It catalyses the reaction (S)-4-amino-5-oxopentanoate + tRNA(Glu) + NADP(+) = L-glutamyl-tRNA(Glu) + NADPH + H(+). The protein operates within porphyrin-containing compound metabolism; protoporphyrin-IX biosynthesis; 5-aminolevulinate from L-glutamyl-tRNA(Glu): step 1/2. In terms of biological role, catalyzes the NADPH-dependent reduction of glutamyl-tRNA(Glu) to glutamate 1-semialdehyde (GSA). This chain is Glutamyl-tRNA reductase, found in Campylobacter jejuni subsp. jejuni serotype O:2 (strain ATCC 700819 / NCTC 11168).